Consider the following 95-residue polypeptide: Oxytetracycline polyketide synthase acyl carrier protein (95 aa).

The Carrier domain maps to Leu-3 to Leu-81. Ser-41 bears the O-(pantetheine 4'-phosphoryl)serine mark.

4'-phosphopantetheine is transferred from CoA to a specific serine of the apo-ACP-like protein.

Its pathway is antibiotic biosynthesis; oxytetracycline biosynthesis. Acyl carrier protein. The protein is Oxytetracycline polyketide synthase acyl carrier protein of Streptomyces rimosus.